We begin with the raw amino-acid sequence, 84 residues long: Kappa-scoloptoxin(11)-Ssm3a (84 aa).

A signal peptide spans 1 to 16 (MSWMFYSFIVFTLAIK).

It belongs to the scoloptoxin-11 family. Contains 2 disulfide bonds. Expressed by the venom gland.

The protein localises to the secreted. In terms of biological role, inhibits voltage-gated potassium channel currents in DRG neurons. 200 nM of the toxin inhibits current amplitude by only 25% and even at concentrations up to 5 uM, the toxin does not inhibit all potassium currents. In vivo, insects injected with this toxin showed signs of neurotoxicity including twitching, paralysis, and body contraction. This is Kappa-scoloptoxin(11)-Ssm3a from Scolopendra mutilans (Chinese red-headed centipede).